We begin with the raw amino-acid sequence, 68 residues long: Large ribosomal subunit protein bL33c (68 aa).

The protein belongs to the bacterial ribosomal protein bL33 family.

The protein localises to the plastid. It localises to the chloroplast. In Amborella trichopoda, this protein is Large ribosomal subunit protein bL33c.